We begin with the raw amino-acid sequence, 211 residues long: Large ribosomal subunit protein uL3 (211 aa).

An N5-methylglutamine modification is found at Gln-150.

It belongs to the universal ribosomal protein uL3 family. In terms of assembly, part of the 50S ribosomal subunit. Forms a cluster with proteins L14 and L19. Post-translationally, methylated by PrmB.

In terms of biological role, one of the primary rRNA binding proteins, it binds directly near the 3'-end of the 23S rRNA, where it nucleates assembly of the 50S subunit. In Pseudomonas entomophila (strain L48), this protein is Large ribosomal subunit protein uL3.